Reading from the N-terminus, the 171-residue chain is Galectin-related protein (171 aa).

The region spanning 38 to 170 (PFCGHIKGGM…INGDLQLTKL (133 aa)) is the Galectin domain.

Its function is as follows. Does not bind lactose, and may not bind carbohydrates. This is Galectin-related protein (lgalsl) from Xenopus tropicalis (Western clawed frog).